Reading from the N-terminus, the 129-residue chain is MSNVPAELKYSKEHEWLRKEAEGTYTVGITEHAQELLGDMVFVDLPEVGATVEAGADCAVAESVKAASDIYAPISGEIVAVNEELNDSPELVNSDPYTDGWIFKIKASDEAQVAALLDAAAYEALLEDE.

The region spanning 24 to 106 is the Lipoyl-binding domain; it reads TYTVGITEHA…YTDGWIFKIK (83 aa). Lys-65 is subject to N6-lipoyllysine.

This sequence belongs to the GcvH family. In terms of assembly, the glycine cleavage system is composed of four proteins: P, T, L and H. (R)-lipoate serves as cofactor.

Functionally, the glycine cleavage system catalyzes the degradation of glycine. The H protein shuttles the methylamine group of glycine from the P protein to the T protein. This is Glycine cleavage system H protein from Klebsiella pneumoniae subsp. pneumoniae (strain ATCC 700721 / MGH 78578).